Consider the following 708-residue polypeptide: DNA-directed RNA polymerase III subunit RPC5 (708 aa).

A compositionally biased stretch (basic and acidic residues) spans 146 to 155 (DAKHREREAA). The tract at residues 146 to 170 (DAKHREREAANEAGDSSQDEAEDDV) is disordered. Residues serine 161 and serine 162 each carry the phosphoserine modification. Lysine 171 participates in a covalent cross-link: Glycyl lysine isopeptide (Lys-Gly) (interchain with G-Cter in SUMO2). A Phosphoserine modification is found at serine 192. Residue tyrosine 224 is modified to Phosphotyrosine. A Glycyl lysine isopeptide (Lys-Gly) (interchain with G-Cter in SUMO2) cross-link involves residue lysine 432. Positions 485–552 (QLRVPAVPPG…DSFNGHPPQG (68 aa)) are disordered. Residue lysine 498 forms a Glycyl lysine isopeptide (Lys-Gly) (interchain with G-Cter in SUMO1); alternate linkage. Residue lysine 498 forms a Glycyl lysine isopeptide (Lys-Gly) (interchain with G-Cter in SUMO2); alternate linkage. The segment covering 502-519 (VSEEGEEDEEQEAEEEPM) has biased composition (acidic residues). Phosphoserine occurs at positions 503 and 522. A required for Pol III complex stability region spans residues 556 to 708 (TPVARELKAF…MWYLKGTVQS (153 aa)). Lysine 659 is covalently cross-linked (Glycyl lysine isopeptide (Lys-Gly) (interchain with G-Cter in SUMO2)).

Component of the RNA polymerase III complex consisting of at least 17 subunits: a ten-subunit horseshoe-shaped catalytic core composed of POLR3A/RPC1, POLR3B/RPC2, POLR1C/RPAC1, POLR1D/RPAC2, POLR3K/RPC10, POLR2E/RPABC1, POLR2F/RPABC2, POLR2H/RPABC3, POLR2K/RPABC4 and POLR2L/RPABC5; the stalk composed of two subunits POLR3H/RPC8 and CRCP/RPC9, forming a structural mobile part that protrudes out of the core and functions primarily in transcription initiation; and additional subunits homologous to general transcription factors of the RNA polymerase II machinery, POLR3D/RPC4-POLR3E/RPC5 heterodimer and POLR3/CRPC3-POLR3F/RPC6-POLR3G/RPC7 heterotrimer.

It is found in the nucleus. Its function is as follows. DNA-dependent RNA polymerase catalyzes the transcription of DNA into RNA using the four ribonucleoside triphosphates as substrates. Specific peripheric component of RNA polymerase III (Pol III) which synthesizes small non-coding RNAs including 5S rRNA, snRNAs, tRNAs and miRNAs from at least 500 distinct genomic loci. Assembles with POLR3D/RPC4 forming a subcomplex that binds the Pol III core. Enables recruitment of Pol III at transcription initiation site and drives transcription initiation from both type 2 and type 3 DNA promoters. Required for efficient transcription termination and reinitiation. Plays a key role in sensing and limiting infection by intracellular bacteria and DNA viruses. Acts as a nuclear and cytosolic DNA sensor involved in innate immune response. Can sense non-self dsDNA that serves as template for transcription into dsRNA. The non-self RNA polymerase III transcripts, such as Epstein-Barr virus-encoded RNAs (EBERs) induce type I interferon and NF-kappa-B through the RIG-I pathway. The protein is DNA-directed RNA polymerase III subunit RPC5 of Homo sapiens (Human).